The primary structure comprises 446 residues: Glutamate-1-semialdehyde 2,1-aminomutase (446 aa).

N6-(pyridoxal phosphate)lysine is present on Lys-263.

The protein belongs to the class-III pyridoxal-phosphate-dependent aminotransferase family. HemL subfamily. Pyridoxal 5'-phosphate is required as a cofactor.

It is found in the cytoplasm. It catalyses the reaction (S)-4-amino-5-oxopentanoate = 5-aminolevulinate. The protein operates within porphyrin-containing compound metabolism; protoporphyrin-IX biosynthesis; 5-aminolevulinate from L-glutamyl-tRNA(Glu): step 2/2. The polypeptide is Glutamate-1-semialdehyde 2,1-aminomutase (Haloquadratum walsbyi (strain DSM 16790 / HBSQ001)).